Here is an 870-residue protein sequence, read N- to C-terminus: Probable disease resistance protein At1g59620 (870 aa).

In terms of domain architecture, NB-ARC spans 123 to 432 (DKRNMRQTFS…AAEGMPRPRY (310 aa)). Residue 167–174 (GMGGIGKT) participates in ATP binding. 6 LRR repeats span residues 543 to 567 (LQLM…IGLL), 568 to 590 (IHLR…MQNL), 703 to 726 (MSGI…IYMP), 735 to 758 (PWHL…ILEK), 759 to 786 (LLQL…GFPQ), and 808 to 833 (MPRL…KFIT).

The protein belongs to the disease resistance NB-LRR family.

Probable disease resistance protein. The chain is Probable disease resistance protein At1g59620 from Arabidopsis thaliana (Mouse-ear cress).